The primary structure comprises 122 residues: Large ribosomal subunit protein uL14 (122 aa).

It belongs to the universal ribosomal protein uL14 family. In terms of assembly, part of the 50S ribosomal subunit. Forms a cluster with proteins L3 and L19. In the 70S ribosome, L14 and L19 interact and together make contacts with the 16S rRNA in bridges B5 and B8.

Functionally, binds to 23S rRNA. Forms part of two intersubunit bridges in the 70S ribosome. The sequence is that of Large ribosomal subunit protein uL14 from Pseudomonas entomophila (strain L48).